The sequence spans 82 residues: UPF0410 protein YeaQ (82 aa).

2 helical membrane-spanning segments follow: residues Gly26 to Ile46 and Gly57 to Tyr77.

This sequence belongs to the UPF0410 family.

Its subcellular location is the cell inner membrane. The sequence is that of UPF0410 protein YeaQ (yeaQ) from Escherichia coli O157:H7.